Consider the following 293-residue polypeptide: Protease HtpX homolog (293 aa).

Helical transmembrane passes span 4–24 (IFLF…VLSL) and 39–59 (PMLL…SLLI). A Zn(2+)-binding site is contributed by His-144. Glu-145 is an active-site residue. Residue His-148 coordinates Zn(2+). The next 2 helical transmembrane spans lie at 159–179 (LVQG…GYFV) and 200–220 (ITVL…VAWF). Glu-225 contacts Zn(2+).

This sequence belongs to the peptidase M48B family. The cofactor is Zn(2+).

The protein resides in the cell inner membrane. The polypeptide is Protease HtpX homolog (Herminiimonas arsenicoxydans).